The following is a 346-amino-acid chain: Ly6/PLAUR domain-containing protein 3 (346 aa).

The signal sequence occupies residues 1-30 (MDPARKAGAQAMIWTAGWLLLLLLRGGAQA). UPAR/Ly6 domains follow at residues 33-126 (CYSC…ALDP) and 140-222 (CYSC…SRCN). N-linked (GlcNAc...) asparagine glycosylation is found at N118, N163, N176, and N183. Residues 233 to 324 (PRIPPLVRLP…KGGPQQPHNK (92 aa)) are disordered. Pro residues predominate over residues 234 to 246 (RIPPLVRLPPPEP). Over residues 247-269 (TTVASTTSVTTSTSAPVRPTSTT) the composition is skewed to low complexity. Residues 283–295 (GVEHEASRDEEPR) show a composition bias toward basic and acidic residues. C326 carries the GPI-anchor amidated cysteine lipid modification. The propeptide at 327–346 (VAPTAGLAALLLAVAAGVLL) is removed in mature form.

As to quaternary structure, binds laminin-1 and laminin-5. Interacts with LGALS3. Interacts with AGR2 and AGR3. Post-translationally, N-glycosylated and O-glycosylated. As to expression, expressed in placenta, skin and urothelium. Found in suprabasal keratinocytes of chronic wounds. Weak expression is found in esophagus and peripheral blood mononuclear cells. Found in the majority of primary and metastatic transitional cell carcinomas (TCCs) and as well in breast cancer tissues, but not in adjacent normal tissues. High expression is found in the tumor component of some noninvasive superficial lesions and in invasive and metastatic urothelial cancers.

It is found in the cell membrane. Functionally, supports cell migration. May be involved in urothelial cell-matrix interactions. May be involved in tumor progression. The sequence is that of Ly6/PLAUR domain-containing protein 3 (LYPD3) from Homo sapiens (Human).